We begin with the raw amino-acid sequence, 309 residues long: tRNA-cytidine(32) 2-sulfurtransferase (309 aa).

A PP-loop motif motif is present at residues 45 to 50; it reads SGGKDS. Cysteine 120, cysteine 123, and cysteine 211 together coordinate [4Fe-4S] cluster.

It belongs to the TtcA family. As to quaternary structure, homodimer. It depends on Mg(2+) as a cofactor. [4Fe-4S] cluster serves as cofactor.

Its subcellular location is the cytoplasm. It catalyses the reaction cytidine(32) in tRNA + S-sulfanyl-L-cysteinyl-[cysteine desulfurase] + AH2 + ATP = 2-thiocytidine(32) in tRNA + L-cysteinyl-[cysteine desulfurase] + A + AMP + diphosphate + H(+). The protein operates within tRNA modification. Its function is as follows. Catalyzes the ATP-dependent 2-thiolation of cytidine in position 32 of tRNA, to form 2-thiocytidine (s(2)C32). The sulfur atoms are provided by the cysteine/cysteine desulfurase (IscS) system. This Psychromonas ingrahamii (strain DSM 17664 / CCUG 51855 / 37) protein is tRNA-cytidine(32) 2-sulfurtransferase.